We begin with the raw amino-acid sequence, 609 residues long: UvrABC system protein C (609 aa).

The region spanning 16–94 (HLPGVYRHLD…IKSLRPRYNI (79 aa)) is the GIY-YIG domain. Residues 203–238 (REVMDEIEARMLQASTELRFEEAAVLRDQMGSLSKV) enclose the UVR domain.

It belongs to the UvrC family. As to quaternary structure, interacts with UvrB in an incision complex.

Its subcellular location is the cytoplasm. Its function is as follows. The UvrABC repair system catalyzes the recognition and processing of DNA lesions. UvrC both incises the 5' and 3' sides of the lesion. The N-terminal half is responsible for the 3' incision and the C-terminal half is responsible for the 5' incision. The polypeptide is UvrABC system protein C (Bordetella bronchiseptica (strain ATCC BAA-588 / NCTC 13252 / RB50) (Alcaligenes bronchisepticus)).